Consider the following 167-residue polypeptide: Sporulation membrane protein YtrI (167 aa).

Residues 15 to 35 traverse the membrane as a helical segment; the sequence is FFAGMMCGAVISWFFFLFTYG.

It localises to the cell membrane. Involved in sporulation. The polypeptide is Sporulation membrane protein YtrI (ytrI) (Bacillus subtilis (strain 168)).